A 282-amino-acid polypeptide reads, in one-letter code: Putative lactoylglutathione lyase (282 aa).

Position 2 is an N-acetylalanine (Ala2). 2 VOC domains span residues 17-141 (RFLH…LIQR) and 147-274 (PLCQ…LVDN). His20 contributes to the Zn(2+) binding site. Arg24 contributes to the substrate binding site. Glu71 contributes to the Zn(2+) binding site. Positions 75 and 89 each coordinate substrate. Residues His89 and Glu137 each coordinate Zn(2+). Residue Glu137 is the Proton donor/acceptor of the active site. Residue 254–255 (LG) coordinates substrate.

Belongs to the glyoxalase I family. Zn(2+) is required as a cofactor.

It carries out the reaction (R)-S-lactoylglutathione = methylglyoxal + glutathione. The protein operates within secondary metabolite metabolism; methylglyoxal degradation; (R)-lactate from methylglyoxal: step 1/2. In terms of biological role, catalyzes the conversion of hemimercaptal, formed from methylglyoxal and glutathione, to S-lactoylglutathione. This Brassica oleracea var. gemmifera (Brussel sprouts) protein is Putative lactoylglutathione lyase.